The sequence spans 502 residues: Probable malate:quinone oxidoreductase (502 aa).

Belongs to the MQO family. It depends on FAD as a cofactor.

It catalyses the reaction (S)-malate + a quinone = a quinol + oxaloacetate. It participates in carbohydrate metabolism; tricarboxylic acid cycle; oxaloacetate from (S)-malate (quinone route): step 1/1. The sequence is that of Probable malate:quinone oxidoreductase from Synechococcus sp. (strain CC9605).